We begin with the raw amino-acid sequence, 69 residues long: Cytochrome c oxidase subunit 8A, mitochondrial (69 aa).

The N-terminal 25 residues, 1 to 25 (MSVLTPLLLRGLTGSARRLPVPRAQ), are a transit peptide targeting the mitochondrion. The SIFI-degron signature appears at 2–19 (SVLTPLLLRGLTGSARRL). At 26-36 (VHSMPPEQKLG) the chain is on the mitochondrial matrix side. The chain crosses the membrane as a helical span at residues 37 to 60 (VLELAIGFTSCLVTFLLPAGWILS). Residues 61-69 (HLDSYKKRG) are Mitochondrial intermembrane-facing.

It belongs to the cytochrome c oxidase VIII family. Component of the cytochrome c oxidase (complex IV, CIV), a multisubunit enzyme composed of 14 subunits. The complex is composed of a catalytic core of 3 subunits MT-CO1, MT-CO2 and MT-CO3, encoded in the mitochondrial DNA, and 11 supernumerary subunits COX4I, COX5A, COX5B, COX6A, COX6B, COX6C, COX7A, COX7B, COX7C, COX8 and NDUFA4, which are encoded in the nuclear genome. The complex exists as a monomer or a dimer and forms supercomplexes (SCs) in the inner mitochondrial membrane with NADH-ubiquinone oxidoreductase (complex I, CI) and ubiquinol-cytochrome c oxidoreductase (cytochrome b-c1 complex, complex III, CIII), resulting in different assemblies (supercomplex SCI(1)III(2)IV(1) and megacomplex MCI(2)III(2)IV(2)). Post-translationally, in response to mitochondrial stress, the precursor protein is ubiquitinated by the SIFI complex in the cytoplasm before mitochondrial import, leading to its degradation. Within the SIFI complex, UBR4 initiates ubiquitin chain that are further elongated or branched by KCMF1.

It localises to the mitochondrion inner membrane. It participates in energy metabolism; oxidative phosphorylation. Functionally, component of the cytochrome c oxidase, the last enzyme in the mitochondrial electron transport chain which drives oxidative phosphorylation. The respiratory chain contains 3 multisubunit complexes succinate dehydrogenase (complex II, CII), ubiquinol-cytochrome c oxidoreductase (cytochrome b-c1 complex, complex III, CIII) and cytochrome c oxidase (complex IV, CIV), that cooperate to transfer electrons derived from NADH and succinate to molecular oxygen, creating an electrochemical gradient over the inner membrane that drives transmembrane transport and the ATP synthase. Cytochrome c oxidase is the component of the respiratory chain that catalyzes the reduction of oxygen to water. Electrons originating from reduced cytochrome c in the intermembrane space (IMS) are transferred via the dinuclear copper A center (CU(A)) of subunit 2 and heme A of subunit 1 to the active site in subunit 1, a binuclear center (BNC) formed by heme A3 and copper B (CU(B)). The BNC reduces molecular oxygen to 2 water molecules using 4 electrons from cytochrome c in the IMS and 4 protons from the mitochondrial matrix. The chain is Cytochrome c oxidase subunit 8A, mitochondrial (COX8A) from Saimiri sciureus (Common squirrel monkey).